Reading from the N-terminus, the 820-residue chain is Leucine--tRNA ligase (820 aa).

The 'HIGH' region signature appears at 40–51; the sequence is PYPSGAGLHVGH. Positions 601–605 match the 'KMSKS' region motif; it reads KMSKS. Lys-604 is a binding site for ATP.

This sequence belongs to the class-I aminoacyl-tRNA synthetase family.

The protein localises to the cytoplasm. It catalyses the reaction tRNA(Leu) + L-leucine + ATP = L-leucyl-tRNA(Leu) + AMP + diphosphate. The chain is Leucine--tRNA ligase from Chlamydia pneumoniae (Chlamydophila pneumoniae).